The following is a 323-amino-acid chain: Ubiquinone biosynthesis protein COQ4, mitochondrial (323 aa).

Positions 209, 210, 213, and 225 each coordinate Zn(2+).

The protein belongs to the COQ4 family. As to quaternary structure, component of a multi-subunit COQ enzyme complex, composed of at least COQ3, COQ4, COQ5, COQ6, COQ7 and COQ9. Requires Zn(2+) as cofactor.

The protein localises to the mitochondrion inner membrane. The enzyme catalyses a 4-hydroxy-3-methoxy-5-(all-trans-polyprenyl)benzoate + H(+) = a 2-methoxy-6-(all-trans-polyprenyl)phenol + CO2. It participates in cofactor biosynthesis; ubiquinone biosynthesis. In terms of biological role, lyase that catalyzes the C1-decarboxylation of 4-hydroxy-3-methoxy-5-(all-trans-polyprenyl)benzoic acid into 2-methoxy-6-(all-trans-polyprenyl)phenol during ubiquinone biosynthesis. The sequence is that of Ubiquinone biosynthesis protein COQ4, mitochondrial from Debaryomyces hansenii (strain ATCC 36239 / CBS 767 / BCRC 21394 / JCM 1990 / NBRC 0083 / IGC 2968) (Yeast).